The sequence spans 325 residues: MAASLEKAGLGISVRLLEYTGDGERIVAVASKVSLSRSPAERLLAIGEDEVETWILETFRRQHFSPWEHSVYTFMVEGLSRVASHQLVRHRVASYTQLSHRYSEGYLREAALKACESIGLDCPSKPAETEGGRKAAYRLYSQALERAARDFGASERFAIAAKAFVIPPTILARGDGGDGVVEAYLRSAAIYYSLLSRGARREDARYILPDALRTRIVVTMNARELIQVFFPLRMCTRAQWEIRHIAWLLWRELSRVHPRLFRWAGPSCVLRENTLRTTPASLYSYLEGVERFTQPRCPELVENKAIPGCLRQAASVAPPGDGEYE.

Positions 12-267 constitute a ThyX domain; sequence ISVRLLEYTG…PRLFRWAGPS (256 aa). Residues S65, 89–91, and Q97 each bind FAD; that span reads RHR. Residues 86–89 and 97–101 each bind dUMP; these read QLVR and QLSHR. The ThyX motif motif lies at 89–99; that stretch reads RHRVASYTQLS. An insert region spans residues 110–159; the sequence is AALKACESIGLDCPSKPAETEGGRKAAYRLYSQALERAARDFGASERFAI. R205 serves as a coordination point for dUMP. 221 to 223 is an FAD binding site; it reads NAR. R233 contacts dUMP. The active-site Involved in ionization of N3 of dUMP, leading to its activation is the R233.

Belongs to the thymidylate synthase ThyX family. Homotetramer. Requires FAD as cofactor.

The enzyme catalyses dUMP + (6R)-5,10-methylene-5,6,7,8-tetrahydrofolate + NADPH + H(+) = dTMP + (6S)-5,6,7,8-tetrahydrofolate + NADP(+). The protein operates within pyrimidine metabolism; dTTP biosynthesis. Its function is as follows. Catalyzes the reductive methylation of 2'-deoxyuridine-5'-monophosphate (dUMP) to 2'-deoxythymidine-5'-monophosphate (dTMP) while utilizing 5,10-methylenetetrahydrofolate (mTHF) as the methyl donor, and NADPH and FADH(2) as the reductant. This chain is Flavin-dependent thymidylate synthase, found in Aeropyrum pernix (strain ATCC 700893 / DSM 11879 / JCM 9820 / NBRC 100138 / K1).